Here is a 260-residue protein sequence, read N- to C-terminus: Indole-3-glycerol phosphate synthase (260 aa).

Belongs to the TrpC family.

It carries out the reaction 1-(2-carboxyphenylamino)-1-deoxy-D-ribulose 5-phosphate + H(+) = (1S,2R)-1-C-(indol-3-yl)glycerol 3-phosphate + CO2 + H2O. The protein operates within amino-acid biosynthesis; L-tryptophan biosynthesis; L-tryptophan from chorismate: step 4/5. This chain is Indole-3-glycerol phosphate synthase, found in Acetivibrio thermocellus (strain ATCC 27405 / DSM 1237 / JCM 9322 / NBRC 103400 / NCIMB 10682 / NRRL B-4536 / VPI 7372) (Clostridium thermocellum).